Here is a 340-residue protein sequence, read N- to C-terminus: S-adenosylmethionine:tRNA ribosyltransferase-isomerase (340 aa).

It belongs to the QueA family. In terms of assembly, monomer.

It is found in the cytoplasm. It catalyses the reaction 7-aminomethyl-7-carbaguanosine(34) in tRNA + S-adenosyl-L-methionine = epoxyqueuosine(34) in tRNA + adenine + L-methionine + 2 H(+). The protein operates within tRNA modification; tRNA-queuosine biosynthesis. Its function is as follows. Transfers and isomerizes the ribose moiety from AdoMet to the 7-aminomethyl group of 7-deazaguanine (preQ1-tRNA) to give epoxyqueuosine (oQ-tRNA). The protein is S-adenosylmethionine:tRNA ribosyltransferase-isomerase of Chlorobaculum parvum (strain DSM 263 / NCIMB 8327) (Chlorobium vibrioforme subsp. thiosulfatophilum).